We begin with the raw amino-acid sequence, 215 residues long: UPF0319 protein VVA1446 (215 aa).

A signal peptide spans 1 to 21; the sequence is MNIIKPLTCILAMSISGLATA.

This sequence belongs to the UPF0319 family.

The sequence is that of UPF0319 protein VVA1446 from Vibrio vulnificus (strain YJ016).